A 348-amino-acid polypeptide reads, in one-letter code: Fructose-1,6-bisphosphatase class 1 (348 aa).

Positions 92, 111, 113, and 114 each coordinate Mg(2+). Substrate is bound by residues 114-117 and Asn204; that span reads DGSS. Residue Glu276 coordinates Mg(2+).

This sequence belongs to the FBPase class 1 family. As to quaternary structure, homotetramer. Mg(2+) is required as a cofactor.

It localises to the cytoplasm. The enzyme catalyses beta-D-fructose 1,6-bisphosphate + H2O = beta-D-fructose 6-phosphate + phosphate. It functions in the pathway carbohydrate biosynthesis; gluconeogenesis. The protein is Fructose-1,6-bisphosphatase class 1 of Methylorubrum populi (strain ATCC BAA-705 / NCIMB 13946 / BJ001) (Methylobacterium populi).